Reading from the N-terminus, the 203-residue chain is Ras-like protein 1 (203 aa).

17–24 (GGGGVGKS) contributes to the GTP binding site. Residues 39–47 (YDPTIEDSY) carry the Effector region motif. GTP-binding positions include 64–68 (DTAGQ) and 123–126 (NKCD). A Cysteine methyl ester modification is found at cysteine 200. Cysteine 200 is lipidated: S-farnesyl cysteine. The propeptide at 201-203 (ILM) is removed in mature form.

Belongs to the small GTPase superfamily. Ras family.

It is found in the cell membrane. It carries out the reaction GTP + H2O = GDP + phosphate + H(+). Alternates between an inactive form bound to GDP and an active form bound to GTP. Activated by a guanine nucleotide-exchange factor (GEF) and inactivated by a GTPase-activating protein (GAP). The sequence is that of Ras-like protein 1 (RAS1) from Mucor circinelloides f. lusitanicus (Mucor racemosus var. lusitanicus).